The primary structure comprises 546 residues: Glucose-6-phosphate isomerase (546 aa).

Catalysis depends on Glu-353, which acts as the Proton donor. Catalysis depends on residues His-384 and Lys-512.

This sequence belongs to the GPI family.

The protein resides in the cytoplasm. The catalysed reaction is alpha-D-glucose 6-phosphate = beta-D-fructose 6-phosphate. The protein operates within carbohydrate biosynthesis; gluconeogenesis. Its pathway is carbohydrate degradation; glycolysis; D-glyceraldehyde 3-phosphate and glycerone phosphate from D-glucose: step 2/4. Catalyzes the reversible isomerization of glucose-6-phosphate to fructose-6-phosphate. This Methylococcus capsulatus (strain ATCC 33009 / NCIMB 11132 / Bath) protein is Glucose-6-phosphate isomerase.